The chain runs to 344 residues: Phenylalanine--tRNA ligase alpha subunit (344 aa).

A Mg(2+)-binding site is contributed by E256.

It belongs to the class-II aminoacyl-tRNA synthetase family. Phe-tRNA synthetase alpha subunit type 1 subfamily. In terms of assembly, tetramer of two alpha and two beta subunits. Mg(2+) serves as cofactor.

It localises to the cytoplasm. It carries out the reaction tRNA(Phe) + L-phenylalanine + ATP = L-phenylalanyl-tRNA(Phe) + AMP + diphosphate + H(+). This Bacillus anthracis (strain CDC 684 / NRRL 3495) protein is Phenylalanine--tRNA ligase alpha subunit.